Here is a 537-residue protein sequence, read N- to C-terminus: Hydroxylamine reductase (537 aa).

Cys3, Cys6, Cys15, and Cys21 together coordinate [4Fe-4S] cluster. Hybrid [4Fe-2O-2S] cluster contacts are provided by His239, Glu263, Cys307, Cys393, Cys421, Cys446, Glu480, and Lys482. At Cys393 the chain carries Cysteine persulfide.

This sequence belongs to the HCP family. It depends on [4Fe-4S] cluster as a cofactor. Requires hybrid [4Fe-2O-2S] cluster as cofactor.

The protein resides in the cytoplasm. It carries out the reaction A + NH4(+) + H2O = hydroxylamine + AH2 + H(+). In terms of biological role, catalyzes the reduction of hydroxylamine to form NH(3) and H(2)O. The chain is Hydroxylamine reductase from Lawsonia intracellularis (strain PHE/MN1-00).